The following is a 502-amino-acid chain: Probable cytosol aminopeptidase (502 aa).

Mn(2+) contacts are provided by lysine 270 and aspartate 275. The active site involves lysine 282. Mn(2+) is bound by residues aspartate 293, aspartate 352, and glutamate 354. Arginine 356 is a catalytic residue.

The protein belongs to the peptidase M17 family. It depends on Mn(2+) as a cofactor.

The protein resides in the cytoplasm. The enzyme catalyses Release of an N-terminal amino acid, Xaa-|-Yaa-, in which Xaa is preferably Leu, but may be other amino acids including Pro although not Arg or Lys, and Yaa may be Pro. Amino acid amides and methyl esters are also readily hydrolyzed, but rates on arylamides are exceedingly low.. It carries out the reaction Release of an N-terminal amino acid, preferentially leucine, but not glutamic or aspartic acids.. Presumably involved in the processing and regular turnover of intracellular proteins. Catalyzes the removal of unsubstituted N-terminal amino acids from various peptides. In Buchnera aphidicola subsp. Schizaphis graminum (strain Sg), this protein is Probable cytosol aminopeptidase.